The sequence spans 227 residues: ATP-dependent dethiobiotin synthetase BioD (227 aa).

13–18 (DIGKTY) is an ATP binding site. T17 contacts Mg(2+). K38 is an active-site residue. S42 serves as a coordination point for substrate. Residues D55, 116–119 (EGSG), and 179–180 (NN) each bind ATP. The Mg(2+) site is built by D55 and E116.

The protein belongs to the dethiobiotin synthetase family. Homodimer. Mg(2+) serves as cofactor.

Its subcellular location is the cytoplasm. The enzyme catalyses (7R,8S)-7,8-diammoniononanoate + CO2 + ATP = (4R,5S)-dethiobiotin + ADP + phosphate + 3 H(+). The protein operates within cofactor biosynthesis; biotin biosynthesis; biotin from 7,8-diaminononanoate: step 1/2. In terms of biological role, catalyzes a mechanistically unusual reaction, the ATP-dependent insertion of CO2 between the N7 and N8 nitrogen atoms of 7,8-diaminopelargonic acid (DAPA, also called 7,8-diammoniononanoate) to form a ureido ring. The sequence is that of ATP-dependent dethiobiotin synthetase BioD from Clostridium botulinum (strain Kyoto / Type A2).